The sequence spans 679 residues: Stress-70 protein, mitochondrial (679 aa).

A mitochondrion-targeting transit peptide spans 1–46 (MISASRAAAARLVGAAASRGPTAARHQDSWNGLSHEAFRLVSRRDY). The interaction with NFS1 stretch occupies residues 1 to 432 (MISASRAAAA…IQGGVLAGDV (432 aa)). ADP-binding residues include Thr63 and Asn64. The segment at 63–431 (TNSCVAVMEG…AIQGGVLAGD (369 aa)) is nucleotide-binding domain (NBD). Lys76 is subject to N6-acetyllysine. Phosphothreonine is present on Thr87. 2 positions are modified to N6-acetyllysine; alternate: Lys135 and Lys138. Residues Lys135 and Lys138 each carry the N6-succinyllysine; alternate modification. At Lys143 the chain carries N6-acetyllysine. An N6-acetyllysine; alternate modification is found at Lys206. An N6-succinyllysine; alternate modification is found at Lys206. Lys206 bears the N6-malonyllysine; alternate mark. N6-acetyllysine occurs at positions 234 and 288. Lys300 is subject to N6-acetyllysine; alternate. Residue Lys300 is modified to N6-succinyllysine; alternate. Glu313, Lys316, and Ser320 together coordinate ADP. Lys368 is modified (N6-succinyllysine). Residues Gly388 and Arg391 each coordinate ADP. At Lys394 the chain carries N6-succinyllysine. Position 408 is a phosphoserine (Ser408). The tract at residues 432-441 (VTDVLLLDVT) is interdomain linker. Residues 432 to 679 (VTDVLLLDVT…QKEDQKEEKQ (248 aa)) are interaction with FXN and ISCU. The substrate-binding domain (SBD) stretch occupies residues 442-679 (PLSLGIETLG…QKEDQKEEKQ (238 aa)). Position 513 is an omega-N-methylarginine (Arg513). Lys567 and Lys600 each carry N6-acetyllysine; alternate. Lys567 and Lys600 each carry N6-succinyllysine; alternate. An N6-succinyllysine modification is found at Lys610. N6-acetyllysine is present on Lys612. Position 646 is an N6-acetyllysine; alternate (Lys646). Lys646 bears the N6-succinyllysine; alternate mark. The disordered stretch occupies residues 656–679 (ASEREGSGSSGTGEQKEDQKEEKQ). Over residues 669–679 (EQKEDQKEEKQ) the composition is skewed to basic and acidic residues.

The protein belongs to the heat shock protein 70 family. As to quaternary structure, interacts strongly with the intermediate form of FXN and weakly with its mature form. Interacts with HSCB. Associates with the mitochondrial contact site and cristae organizing system (MICOS) complex, composed of at least MICOS10/MIC10, CHCHD3/MIC19, CHCHD6/MIC25, APOOL/MIC27, IMMT/MIC60, APOO/MIC23/MIC26 and QIL1/MIC13. This complex was also known under the names MINOS or MitOS complex. The MICOS complex associates with mitochondrial outer membrane proteins SAMM50, MTX1, MTX2 and DNAJC11, mitochondrial inner membrane protein TMEM11 and with HSPA9. Interacts with DNLZ, the interaction is required to prevent self-aggregation. Interacts with TESPA1. Interacts with PDPN. Interacts with NFU1, NFS1 and ISCU. Interacts with TP53; the interaction promotes TP53 degradation. Interacts (via SBD domain) with UBXN2A; the interaction with UBXN2A inhibits HSPA9 interaction with and degradation of TP53, thereby promotes TP53 translocation to the nucleus. Interacts with ITPR1 AND VDAC1; this interaction couples ITPR1 to VDAC1. Component of the TIM23 mitochondrial inner membrane pre-sequence translocase complex.

Its subcellular location is the mitochondrion. The protein localises to the nucleus. It is found in the nucleolus. It localises to the cytoplasm. The protein resides in the mitochondrion matrix. It carries out the reaction ATP + H2O = ADP + phosphate + H(+). Its activity is regulated as follows. The chaperone activity is regulated by ATP-induced allosteric coupling of the nucleotide-binding (NBD) and substrate-binding (SBD) domains. ATP binding in the NBD leads to a conformational change in the NBD, which is transferred through the interdomain linker (IDL) to the substrate-binding domain (SBD). This elicits a reduced substrate affinity and a faster substrate exchange rate. Upon hydrolysis of ATP to ADP, the protein undergoes a conformational change that increases its affinity for substrate proteins. It cycles through repeated phases of ATP hydrolysis and nucleotide exchange, facilitating repeated cycles of substrate binding and release. Functions in collaboration with co-chaperones. Functions with the co-chaperone, DNLZ, to maintain solubility and regulate ATP hydrolysis. Nucleotide exchange factors, GRPEL1 and GRPEL2, accelerate nucleotide exchange. Mitochondrial chaperone that plays a key role in mitochondrial protein import, folding, and assembly. Plays an essential role in the protein quality control system, the correct folding of proteins, the re-folding of misfolded proteins, and the targeting of proteins for subsequent degradation. These processes are achieved through cycles of ATP binding, ATP hydrolysis, and ADP release, mediated by co-chaperones. In mitochondria, it associates with the TIM (translocase of the inner membrane) protein complex to assist in the import and folding of mitochondrial proteins. Plays an important role in mitochondrial iron-sulfur cluster (ISC) biogenesis, interacts with and stabilizes ISC cluster assembly proteins FXN, NFU1, NFS1 and ISCU. Regulates erythropoiesis via stabilization of ISC assembly. Regulates mitochondrial calcium-dependent apoptosis by coupling two calcium channels, ITPR1 and VDAC1, at the mitochondria-associated endoplasmic reticulum (ER) membrane to facilitate calcium transport from the ER lumen to the mitochondria intermembrane space, providing calcium for the downstream calcium channel MCU, which releases it into the mitochondrial matrix. Although primarily located in the mitochondria, it is also found in other cellular compartments. In the cytosol, it associates with proteins involved in signaling, apoptosis, or senescence. It may play a role in cell cycle regulation via its interaction with and promotion of degradation of TP53. May play a role in the control of cell proliferation and cellular aging. Protects against reactive oxygen species (ROS). Extracellular HSPA9 plays a cytoprotective role by preventing cell lysis following immune attack by the membrane attack complex by disrupting formation of the complex. This chain is Stress-70 protein, mitochondrial, found in Homo sapiens (Human).